The following is a 511-amino-acid chain: Maturase K (511 aa).

The protein belongs to the intron maturase 2 family. MatK subfamily.

Its subcellular location is the plastid. It is found in the chloroplast. Usually encoded in the trnK tRNA gene intron. Probably assists in splicing its own and other chloroplast group II introns. This chain is Maturase K, found in Anchomanes difformis (Amorphophallus difformis).